Here is a 907-residue protein sequence, read N- to C-terminus: Phosphoenolpyruvate carboxylase (907 aa).

Active-site residues include H138 and K570.

The protein belongs to the PEPCase type 1 family. The cofactor is Mg(2+).

The catalysed reaction is oxaloacetate + phosphate = phosphoenolpyruvate + hydrogencarbonate. Its function is as follows. Forms oxaloacetate, a four-carbon dicarboxylic acid source for the tricarboxylic acid cycle. This Streptococcus mutans serotype c (strain ATCC 700610 / UA159) protein is Phosphoenolpyruvate carboxylase.